The chain runs to 863 residues: Leucine--tRNA ligase (863 aa).

Positions 42–52 (PYPSGRLHMGH) match the 'HIGH' region motif. A 'KMSKS' region motif is present at residues 622 to 626 (KMSKS). Lys-625 is an ATP binding site.

It belongs to the class-I aminoacyl-tRNA synthetase family.

It is found in the cytoplasm. The catalysed reaction is tRNA(Leu) + L-leucine + ATP = L-leucyl-tRNA(Leu) + AMP + diphosphate. This chain is Leucine--tRNA ligase, found in Shewanella loihica (strain ATCC BAA-1088 / PV-4).